Reading from the N-terminus, the 768-residue chain is Lon protease (768 aa).

Residues 4 to 198 form the Lon N-terminal domain; the sequence is APFLPIRDLV…RILDEIVAEM (195 aa). 349–356 contributes to the ATP binding site; sequence GPPGIGKT. Residues 586-768 enclose the Lon proteolytic domain; the sequence is TGKIGVVNGL…DDVSKLVFVK (183 aa). Catalysis depends on residues Ser-674 and Lys-717.

This sequence belongs to the peptidase S16 family. Homohexamer. Organized in a ring with a central cavity.

The protein localises to the cytoplasm. It catalyses the reaction Hydrolysis of proteins in presence of ATP.. Its function is as follows. ATP-dependent serine protease that mediates the selective degradation of mutant and abnormal proteins as well as certain short-lived regulatory proteins. Required for cellular homeostasis and for survival from DNA damage and developmental changes induced by stress. Degrades polypeptides processively to yield small peptide fragments that are 5 to 10 amino acids long. Binds to DNA in a double-stranded, site-specific manner. This is Lon protease from Fusobacterium nucleatum subsp. nucleatum (strain ATCC 25586 / DSM 15643 / BCRC 10681 / CIP 101130 / JCM 8532 / KCTC 2640 / LMG 13131 / VPI 4355).